Here is a 33-residue protein sequence, read N- to C-terminus: Beta-amanitin proprotein (33 aa).

Residues 1–10 constitute a propeptide that is removed on maturation; it reads MSDINATRLP. Residues 11-18 constitute a cross-link (cyclopeptide (Ile-Pro)); the sequence is IWGIGCDP. A cross-link (2'-cysteinyl-6'-hydroxytryptophan sulfoxide (Trp-Cys)) is located at residues 12 to 16; it reads WGIGC. A propeptide spanning residues 19–33 is cleaved from the precursor; that stretch reads CVGDDVAALTTRGEA.

Belongs to the MSDIN fungal toxin family. In terms of processing, processed by the macrocyclase-peptidase enzyme POPB to yield a toxic cyclic decapeptide. POPB first removes 10 residues from the N-terminus. Conformational trapping of the remaining peptide forces the enzyme to release this intermediate rather than proceed to macrocyclization. The enzyme rebinds the remaining peptide in a different conformation and catalyzes macrocyclization of the N-terminal 8 residues.

Functionally, toxin belonging to the bicyclic octapeptides amatoxins that acts by binding non-competitively to RNA polymerase II and greatly slowing the elongation of transcripts from target promoters. This Amanita rimosa protein is Beta-amanitin proprotein.